A 285-amino-acid chain; its full sequence is Urease accessory protein UreD (285 aa).

It belongs to the UreD family. In terms of assembly, ureD, UreF and UreG form a complex that acts as a GTP-hydrolysis-dependent molecular chaperone, activating the urease apoprotein by helping to assemble the nickel containing metallocenter of UreC. The UreE protein probably delivers the nickel.

It is found in the cytoplasm. In terms of biological role, required for maturation of urease via the functional incorporation of the urease nickel metallocenter. The sequence is that of Urease accessory protein UreD from Azoarcus sp. (strain BH72).